Here is a 366-residue protein sequence, read N- to C-terminus: 5-formaminoimidazole-4-carboxamide-1-(beta)-D-ribofuranosyl 5'-monophosphate synthetase (366 aa).

Positions 27 and 96 each coordinate 5-amino-1-(5-phospho-beta-D-ribosyl)imidazole-4-carboxamide. An ATP-grasp domain is found at 131–357 (RKWLEDAGVP…IAREIKEAVK (227 aa)). Residues 154–208 (PVIV…VRFY) and E239 each bind ATP. N263 contacts 5-amino-1-(5-phospho-beta-D-ribosyl)imidazole-4-carboxamide. E302 and E315 together coordinate Mg(2+).

It belongs to the phosphohexose mutase family. It depends on Mg(2+) as a cofactor. Requires Mn(2+) as cofactor.

It catalyses the reaction 5-amino-1-(5-phospho-beta-D-ribosyl)imidazole-4-carboxamide + formate + ATP = 5-formamido-1-(5-phospho-D-ribosyl)imidazole-4-carboxamide + ADP + phosphate. The protein operates within purine metabolism; IMP biosynthesis via de novo pathway; 5-formamido-1-(5-phospho-D-ribosyl)imidazole-4-carboxamide from 5-amino-1-(5-phospho-D-ribosyl)imidazole-4-carboxamide (formate route): step 1/1. In terms of biological role, catalyzes the ATP- and formate-dependent formylation of 5-aminoimidazole-4-carboxamide-1-beta-d-ribofuranosyl 5'-monophosphate (AICAR) to 5-formaminoimidazole-4-carboxamide-1-beta-d-ribofuranosyl 5'-monophosphate (FAICAR) in the absence of folates. In Korarchaeum cryptofilum (strain OPF8), this protein is 5-formaminoimidazole-4-carboxamide-1-(beta)-D-ribofuranosyl 5'-monophosphate synthetase.